The primary structure comprises 318 residues: NADH-ubiquinone oxidoreductase chain 1 (318 aa).

Transmembrane regions (helical) follow at residues 3 to 23 (TTNI…LTLV), 69 to 89 (FMFT…WIPL), 100 to 120 (LGIL…LWSG), 135 to 155 (AVAQ…SLVL), 171 to 191 (HMWL…STLA), 213 to 233 (VEYA…NIIL), 253 to 273 (ELHT…FLWI), and 294 to 314 (LPLT…FASI).

It belongs to the complex I subunit 1 family.

The protein resides in the mitochondrion inner membrane. The catalysed reaction is a ubiquinone + NADH + 5 H(+)(in) = a ubiquinol + NAD(+) + 4 H(+)(out). Its function is as follows. Core subunit of the mitochondrial membrane respiratory chain NADH dehydrogenase (Complex I) that is believed to belong to the minimal assembly required for catalysis. Complex I functions in the transfer of electrons from NADH to the respiratory chain. The immediate electron acceptor for the enzyme is believed to be ubiquinone. The chain is NADH-ubiquinone oxidoreductase chain 1 (MT-ND1) from Choloepus didactylus (Southern two-toed sloth).